The sequence spans 205 residues: 2-dehydro-3-deoxy-6-phosphogalactonate aldolase (205 aa).

R14 contacts 2-dehydro-3-deoxy-6-phospho-D-galactonate. The active-site Proton donor/acceptor is the E37. Residues T66, K126, G156, G176, and S177 each coordinate 2-dehydro-3-deoxy-6-phospho-D-galactonate. K126 functions as the Schiff-base intermediate with substrate in the catalytic mechanism.

The protein belongs to the KHG/KDPG aldolase family. Homotrimer.

It catalyses the reaction 2-dehydro-3-deoxy-6-phospho-D-galactonate = D-glyceraldehyde 3-phosphate + pyruvate. Its pathway is carbohydrate acid metabolism; D-galactonate degradation; D-glyceraldehyde 3-phosphate and pyruvate from D-galactonate: step 3/3. Functionally, involved in the degradation of galactose via the DeLey-Doudoroff pathway. Catalyzes the reversible, stereospecific retro-aldol cleavage of 2-keto-3-deoxy-6-phosphogalactonate (KDPGal) to pyruvate and D-glyceraldehyde-3-phosphate. In the synthetic direction, it catalyzes the addition of pyruvate to electrophilic aldehydes with re-facial selectivity. It can use a limited number of aldehyde substrates, including D-glyceraldehyde-3-phosphate (natural substrate), D-glyceraldehyde, glycolaldehyde, 2-pyridinecarboxaldehyde, D-ribose, D-erythrose and D-threose. It efficiently catalyzes aldol addition only using pyruvate as the nucleophilic component and accepts both stereochemical configurations at C2 of the electrophile. The chain is 2-dehydro-3-deoxy-6-phosphogalactonate aldolase (dgoA) from Escherichia coli (strain K12).